Consider the following 1023-residue polypeptide: NRPS-like oxidoreductase fscA (1023 aa).

The interval 54 to 454 (TYGDLNGMAT…NHPFVRQCMV (401 aa)) is adenylation. Residues 554 to 637 (PEDDVIGRQI…SIANHVRSAQ (84 aa)) form the Carrier domain. Residue Ser596 is modified to O-(pantetheine 4'-phosphoryl)serine. In terms of domain architecture, Thioester reductase (TE) spans 685-901 (LTGGAGYLGQ…VYDESTTRAR (217 aa)).

Belongs to the NRP synthetase family. Pantetheine 4'-phosphate serves as cofactor.

It participates in secondary metabolite biosynthesis. In terms of biological role, NRPS-like oxidoreductasee; part of the fragmented gene cluster that mediates the biosynthesis of fusarochromene, a tryptophan-derived metabolite closely related to a group of mycotoxins including fusarochromanone. Within the pathway, fscA acts as an oxidoreductase that reduces the carboxyl group of 4-hydroxykyrunenine to primary alcohol. The first step of the pathway is the epimerization of L-tryptophan to D-tryptophan in the presence of the NRPS-like tryptophan epimerase fscC. D-tryptophan is subsequently hydroxylated by the tryptophan 6-hydroxylase fscE to yield 6-hydroxytryptophan. The pyrrole ring undergoes cleavaged by the tryptophan 2,3-dioxygenase fscD and is finally converted to 4-hydroxykyrunenine by the hydrolase fscH. The NRPS-like oxidoreductase fscA reduces the carboxyl group to primary alcohol and the DMATS-type prenyltransferase fscG performs prenylation, followed by the formation of a chromene ring catalyzed by the oxidoreductase fscI, which leads to desacetylfusarochromene. Epoxidation by fscF and rearrangement reactions of chromene double bonds convert compound desacetylfusarochromene to fusarochromanones. Although specific acetyltransferases were not found near the fsc gene cluster, several predicted enzymes containing the N-acetyltransferase superfamily domain are present in the genome of F.equiseti. These predicted enzymes may have the potential to convert desacetylfusarochromene to fusarochromene. This is NRPS-like oxidoreductase fscA from Fusarium equiseti (Fusarium scirpi).